The sequence spans 461 residues: Porin AaxA (461 aa).

The first 22 residues, 1-22 (MSFRSILLTALLSLSFTNTMQA), serve as a signal peptide directing secretion.

This sequence belongs to the OprB family.

It is found in the cell outer membrane. Facilitates L-arginine uptake, as part of the AaxABC system. The arginine uptake by the bacterium in the macrophage may be a virulence factor against the host innate immune response. This is Porin AaxA (aaxA) from Chlamydia muridarum (strain MoPn / Nigg).